The primary structure comprises 298 residues: Tryptophan 2,3-dioxygenase (298 aa).

Residues 51-55 (FIIQH), Tyr-113, and Arg-117 each bind substrate. His-240 contacts heme. Thr-254 is a substrate binding site.

This sequence belongs to the tryptophan 2,3-dioxygenase family. In terms of assembly, homotetramer. Heme is required as a cofactor.

It carries out the reaction L-tryptophan + O2 = N-formyl-L-kynurenine. Its pathway is amino-acid degradation; L-tryptophan degradation via kynurenine pathway; L-kynurenine from L-tryptophan: step 1/2. Functionally, heme-dependent dioxygenase that catalyzes the oxidative cleavage of the L-tryptophan (L-Trp) pyrrole ring and converts L-tryptophan to N-formyl-L-kynurenine. Catalyzes the oxidative cleavage of the indole moiety. This Xanthomonas euvesicatoria pv. vesicatoria (strain 85-10) (Xanthomonas campestris pv. vesicatoria) protein is Tryptophan 2,3-dioxygenase.